Reading from the N-terminus, the 600-residue chain is RNA-binding protein 47 (600 aa).

The segment covering 1–25 (MTAEDSASAVAMSNPSPSSSSKSSS) has biased composition (low complexity). A disordered region spans residues 1–37 (MTAEDSASAVAMSNPSPSSSSKSSSGHPQHHCTVPEG). RRM domains follow at residues 82-160 (CEIF…SSVD), 162-244 (CRLF…WAEP), and 257-329 (KILY…LAKP).

It belongs to the RRM RBM47 family. As to quaternary structure, homodimer. May interact with MAVS; may regulate MAVS lysosomal degradation.

The protein resides in the nucleus. Its subcellular location is the cytoplasm. Its function is as follows. Single-stranded RNA-binding protein that functions in a variety of RNA processes, including alternative splicing, RNA stabilization, and RNA editing. Independently of its RNA-binding activity, could negatively regulate MAVS by promoting its lysosomal degradation. The protein is RNA-binding protein 47 (rbm47) of Danio rerio (Zebrafish).